The following is a 97-amino-acid chain: HssA/B-like protein 48 (97 aa).

2 disordered regions span residues 1–20 (MTLF…SKSS) and 78–97 (GSGY…CCGI).

Belongs to the hssA/B family.

This Dictyostelium discoideum (Social amoeba) protein is HssA/B-like protein 48 (hssl48).